Consider the following 168-residue polypeptide: MKKMLKVGQIVNTHGIKGELKVTSLSDYLERFEELEWVYIQGYDEKYYIGNIKYRPTTVILSFEGYDNINIVEQFKGKYVLIDESQRRELPEDTFYKADLIGLDGYTVEEVYLGKLVDIIQAGSNEVYVFRDKETNKDILIPAVKEFIPEISLEKKRITVDPIEGMIE.

Residues 92–166 (EDTFYKADLI…RITVDPIEGM (75 aa)) enclose the PRC barrel domain.

The protein belongs to the RimM family. As to quaternary structure, binds ribosomal protein uS19.

The protein localises to the cytoplasm. In terms of biological role, an accessory protein needed during the final step in the assembly of 30S ribosomal subunit, possibly for assembly of the head region. Essential for efficient processing of 16S rRNA. May be needed both before and after RbfA during the maturation of 16S rRNA. It has affinity for free ribosomal 30S subunits but not for 70S ribosomes. The polypeptide is Ribosome maturation factor RimM (Alkaliphilus metalliredigens (strain QYMF)).